The following is a 600-amino-acid chain: UvrABC system protein C (600 aa).

One can recognise a GIY-YIG domain in the interval 15-92; sequence EKAGCYLMKD…IKKYQPYYNV (78 aa). Residues 197–232 form the UVR domain; it reads QEVKKDLTNKMLQASADLEFERAGELRDQLKYIEET.

Belongs to the UvrC family. As to quaternary structure, interacts with UvrB in an incision complex.

Its subcellular location is the cytoplasm. In terms of biological role, the UvrABC repair system catalyzes the recognition and processing of DNA lesions. UvrC both incises the 5' and 3' sides of the lesion. The N-terminal half is responsible for the 3' incision and the C-terminal half is responsible for the 5' incision. This Lactobacillus delbrueckii subsp. bulgaricus (strain ATCC BAA-365 / Lb-18) protein is UvrABC system protein C.